The chain runs to 168 residues: Protein FAM163A (168 aa).

Residues 6–26 (VVITGGILATVILLCIIAVLC) traverse the membrane as a helical segment.

Belongs to the FAM163 family.

It is found in the membrane. This Mus musculus (Mouse) protein is Protein FAM163A (Fam163a).